The primary structure comprises 967 residues: Sulfite dehydrogenase subunit A (967 aa).

Positions 15 to 71 constitute a 4Fe-4S Mo/W bis-MGD-type domain; it reads VEVKETTCYMCACRCGIRVHLRDGEVRYIDGNPNHPLNKGVICAKGSSGIMKQYSPG. The [4Fe-4S] cluster site is built by C22, C25, C29, and C57.

It belongs to the prokaryotic molybdopterin-containing oxidoreductase family. As to quaternary structure, forms a heterotrimeric membrane-bound complex composed of a catalytic heterodimer (SoeAB) and a membrane anchor protein (SoeC). It depends on [4Fe-4S] cluster as a cofactor. Mo-bis(molybdopterin guanine dinucleotide) is required as a cofactor.

It localises to the cell inner membrane. It catalyses the reaction a quinone + sulfite + H2O = a quinol + sulfate. The catalysed reaction is a menaquinone + sulfite + H2O = a menaquinol + sulfate. Functionally, part of the SoeABC complex that catalyzes the oxidation of sulfite to sulfate. This is Sulfite dehydrogenase subunit A from Allochromatium vinosum (strain ATCC 17899 / DSM 180 / NBRC 103801 / NCIMB 10441 / D) (Chromatium vinosum).